Here is a 221-residue protein sequence, read N- to C-terminus: MRSQLSLIGKKEGMMHVFDKNGNLVACSVISVDANVVAQLKTASSDGYNAVQIGADVVQAPEKTIEKRFSKALLGHFKKSGGRACRVLKEVVVSEEAVQSVSLGDEFGLEIFDGVSNVDICGISKGKGFQGVMKKFGFRGGPKSHGSGFHRHAGSIGMRSTPGRCFPGSKRPSHMGCDRVTVKNLEVVKVDLDRKVMLVKGAIPGFKGSVVVVKRSCGVEG.

Belongs to the universal ribosomal protein uL3 family. Part of the 50S ribosomal subunit. Forms a cluster with proteins L14 and L19.

Functionally, one of the primary rRNA binding proteins, it binds directly near the 3'-end of the 23S rRNA, where it nucleates assembly of the 50S subunit. The sequence is that of Large ribosomal subunit protein uL3 from Chlamydia trachomatis serovar L2 (strain ATCC VR-902B / DSM 19102 / 434/Bu).